Here is a 209-residue protein sequence, read N- to C-terminus: Orotate phosphoribosyltransferase (209 aa).

Residues Arg96, Lys100, His102, and 122–130 (EDLISTGGS) each bind 5-phospho-alpha-D-ribose 1-diphosphate. Ser126 serves as a coordination point for orotate.

Belongs to the purine/pyrimidine phosphoribosyltransferase family. PyrE subfamily. Homodimer. Mg(2+) is required as a cofactor.

It carries out the reaction orotidine 5'-phosphate + diphosphate = orotate + 5-phospho-alpha-D-ribose 1-diphosphate. Its pathway is pyrimidine metabolism; UMP biosynthesis via de novo pathway; UMP from orotate: step 1/2. Functionally, catalyzes the transfer of a ribosyl phosphate group from 5-phosphoribose 1-diphosphate to orotate, leading to the formation of orotidine monophosphate (OMP). This chain is Orotate phosphoribosyltransferase, found in Cytophaga hutchinsonii (strain ATCC 33406 / DSM 1761 / CIP 103989 / NBRC 15051 / NCIMB 9469 / D465).